The following is a 274-amino-acid chain: Acetyl-coenzyme A carboxylase carboxyl transferase subunit alpha (274 aa).

Residues 2 to 250 (NKEFIKSIVV…KKELMNAMNE (249 aa)) form the CoA carboxyltransferase C-terminal domain.

It belongs to the AccA family. In terms of assembly, acetyl-CoA carboxylase is a heterohexamer composed of biotin carboxyl carrier protein (AccB), biotin carboxylase (AccC) and two subunits each of ACCase subunit alpha (AccA) and ACCase subunit beta (AccD).

Its subcellular location is the cytoplasm. The enzyme catalyses N(6)-carboxybiotinyl-L-lysyl-[protein] + acetyl-CoA = N(6)-biotinyl-L-lysyl-[protein] + malonyl-CoA. Its pathway is lipid metabolism; malonyl-CoA biosynthesis; malonyl-CoA from acetyl-CoA: step 1/1. Component of the acetyl coenzyme A carboxylase (ACC) complex. First, biotin carboxylase catalyzes the carboxylation of biotin on its carrier protein (BCCP) and then the CO(2) group is transferred by the carboxyltransferase to acetyl-CoA to form malonyl-CoA. In Clostridium botulinum (strain Eklund 17B / Type B), this protein is Acetyl-coenzyme A carboxylase carboxyl transferase subunit alpha.